The chain runs to 352 residues: Isoflavone-7-O-methyltransferase 9 (352 aa).

Position 118-127 (118-127) interacts with substrate; that stretch reads VLDPTLSGSY. Positions 196, 219, 239, 240, and 253 each coordinate S-adenosyl-L-methionine. The Proton acceptor role is filled by histidine 257.

This sequence belongs to the class I-like SAM-binding methyltransferase superfamily. Cation-independent O-methyltransferase family. COMT subfamily. As to quaternary structure, homodimer.

The enzyme catalyses a 7-hydroxyisoflavone + S-adenosyl-L-methionine = a 7-methoxyisoflavone + S-adenosyl-L-homocysteine + H(+). It participates in phytoalexin biosynthesis; medicarpin biosynthesis. Its function is as follows. Transfers a methyl group to 7-hydroxyls of the isoflavones daidzein, genistein and 6,7,4'-trihydroxyisoflavone. Can also methylate (+)6a-hydroxymaackiain with lower efficiency. The protein is Isoflavone-7-O-methyltransferase 9 of Medicago sativa (Alfalfa).